Consider the following 276-residue polypeptide: Diaminopimelate epimerase (276 aa).

3 residues coordinate substrate: Asn-13, Gln-46, and Asn-66. Cys-75 (proton donor) is an active-site residue. Residues 76-77 (GN), Asn-159, Asn-192, and 210-211 (ER) contribute to the substrate site. The Proton acceptor role is filled by Cys-219. 220-221 (GT) serves as a coordination point for substrate.

Belongs to the diaminopimelate epimerase family. Homodimer.

The protein localises to the cytoplasm. It catalyses the reaction (2S,6S)-2,6-diaminopimelate = meso-2,6-diaminopimelate. Its pathway is amino-acid biosynthesis; L-lysine biosynthesis via DAP pathway; DL-2,6-diaminopimelate from LL-2,6-diaminopimelate: step 1/1. Catalyzes the stereoinversion of LL-2,6-diaminopimelate (L,L-DAP) to meso-diaminopimelate (meso-DAP), a precursor of L-lysine and an essential component of the bacterial peptidoglycan. The sequence is that of Diaminopimelate epimerase from Stutzerimonas stutzeri (strain A1501) (Pseudomonas stutzeri).